The primary structure comprises 592 residues: UvrABC system protein C (592 aa).

Positions 15 to 92 (ALPGCYLMKD…IQKHQPYFNI (78 aa)) constitute a GIY-YIG domain. The UVR domain maps to 197–232 (DNVKKDLTEKMATAAQEMQFERAAELRDQLRYIEAT).

This sequence belongs to the UvrC family. In terms of assembly, interacts with UvrB in an incision complex.

It localises to the cytoplasm. The UvrABC repair system catalyzes the recognition and processing of DNA lesions. UvrC both incises the 5' and 3' sides of the lesion. The N-terminal half is responsible for the 3' incision and the C-terminal half is responsible for the 5' incision. The polypeptide is UvrABC system protein C (Latilactobacillus sakei subsp. sakei (strain 23K) (Lactobacillus sakei subsp. sakei)).